The chain runs to 152 residues: Snaclec agkisacutacin subunit A (152 aa).

Residues 1-23 (MGRFIFVSFGLLVVFLSLSGTAA) form the signal peptide. Positions 24-152 (DCSSGWSSYE…EQQDPFVCEA (129 aa)) constitute a C-type lectin domain. Cystine bridges form between Cys25/Cys36, Cys53/Cys150, and Cys125/Cys142. Positions 64, 66, and 70 each coordinate Ca(2+). Glu151 lines the Ca(2+) pocket.

This sequence belongs to the snaclec family. In terms of assembly, heterodimer with subunit B of AaACP or agkisacutacin; disulfide-linked. In terms of tissue distribution, expressed by the venom gland.

The protein localises to the secreted. Its function is as follows. Anticoagulant protein which binds to the gamma-carboxyglutamic acid-domain regions of factors IX (F9) and factor X (F10) in the presence of calcium with a 1 to 1 stoichiometry. Also inhibits platelet aggregation by binding to platelet glycoprotein Ibalpha (GP1BA) and functioning as a blocker of von Willebrand factor (VWF). Is devoid of hemorrhagic and lethal activities. Possesses antithrombotic and thrombolytic activities. Also hydrolyzes the Aalpha-chain of fibrinogen (FGA). Does not affect the Bbeta-chain (FGB) and the gamma chain (FGG). This Deinagkistrodon acutus (Hundred-pace snake) protein is Snaclec agkisacutacin subunit A.